The sequence spans 431 residues: Glutamate-1-semialdehyde 2,1-aminomutase (431 aa).

N6-(pyridoxal phosphate)lysine is present on Lys269.

This sequence belongs to the class-III pyridoxal-phosphate-dependent aminotransferase family. HemL subfamily. Homodimer. Pyridoxal 5'-phosphate is required as a cofactor.

Its subcellular location is the cytoplasm. It carries out the reaction (S)-4-amino-5-oxopentanoate = 5-aminolevulinate. Its pathway is porphyrin-containing compound metabolism; protoporphyrin-IX biosynthesis; 5-aminolevulinate from L-glutamyl-tRNA(Glu): step 2/2. In Tolumonas auensis (strain DSM 9187 / NBRC 110442 / TA 4), this protein is Glutamate-1-semialdehyde 2,1-aminomutase.